Reading from the N-terminus, the 682-residue chain is PWWP domain-containing DNA repair factor 3A (682 aa).

Ser105 is modified (phosphoserine). Positions 121 to 145 (EKTDADVASQVSSAPSPSLLGEDGQ) are disordered. Residues 127–140 (VASQVSSAPSPSLL) show a composition bias toward low complexity. Ser168 carries the post-translational modification Phosphoserine. 2 disordered regions span residues 179–318 (GPKT…GAAP) and 334–369 (GAGD…EEEP). Basic and acidic residues predominate over residues 203 to 220 (HGQESTTKKRQRNLGEKP). Phosphoserine is present on residues Ser345 and Ser346. A compositionally biased stretch (polar residues) spans 346–357 (SEESTGFKSTHS). One can recognise a PWWP domain in the interval 383 to 444 (VGMLVWLKYQ…KHFDCKEKHA (62 aa)).

It belongs to the PWWP3A family. Interacts with TP53BP1 (via BRCT domain); the interaction is not dependent on its phosphorylation status. Binds nucleosomes. Interacts with trimethylated 'Lys-36' of histone H3 (H3K36me3) (in vitro).

It localises to the nucleus. Functionally, involved in the DNA damage response pathway by contributing to the maintenance of chromatin architecture. Recruited to the vicinity of DNA breaks by TP53BP1 and plays an accessory role to facilitate damage-induced chromatin changes and promoting chromatin relaxation. Required for efficient DNA repair and cell survival following DNA damage. The sequence is that of PWWP domain-containing DNA repair factor 3A (Pwwp3a) from Mus musculus (Mouse).